A 562-amino-acid chain; its full sequence is Arylsulfatase H (562 aa).

The Ca(2+) site is built by Asp-15, Asp-16, and Cys-55. The Nucleophile role is filled by Cys-55. Residue Cys-55 is modified to 3-oxoalanine (Cys). Residue Lys-115 participates in substrate binding. His-117 is an active-site residue. 2 helical membrane passes run 167–187 (LWISTAVLSLVPLLLLIPKYA) and 189–209 (WFVVPWKVILTFALLAFLFFI). Residue His-271 coordinates substrate. Residues Asp-323 and Asn-324 each coordinate Ca(2+).

The protein belongs to the sulfatase family. The cofactor is Ca(2+). In terms of processing, the conversion to 3-oxoalanine (also known as C-formylglycine, FGly), of a serine or cysteine residue in prokaryotes and of a cysteine residue in eukaryotes, is critical for catalytic activity.

The protein resides in the membrane. This is Arylsulfatase H (ARSH) from Canis lupus familiaris (Dog).